Reading from the N-terminus, the 811-residue chain is Ribonucleoside-diphosphate reductase large subunit (811 aa).

Residues T231, 246 to 247 (SC), G277, 450 to 454 (NLCTE), and 636 to 640 (PTASS) each bind substrate. The cysteines at positions 247 and 467 are disulfide-linked. The active-site Proton acceptor is N450. The Cysteine radical intermediate role is filled by C452. E454 (proton acceptor) is an active-site residue.

This sequence belongs to the ribonucleoside diphosphate reductase large chain family. Heterotetramer composed of a homodimer of the large subunit (R1) and a homodimer of the small subunit (R2). Larger multisubunit protein complex are also active, composed of (R1)n(R2)n.

It catalyses the reaction a 2'-deoxyribonucleoside 5'-diphosphate + [thioredoxin]-disulfide + H2O = a ribonucleoside 5'-diphosphate + [thioredoxin]-dithiol. In terms of biological role, ribonucleoside-diphosphate reductase holoenzyme provides the precursors necessary for viral DNA synthesis. Allows virus growth in non-dividing cells, as well as reactivation from latency in infected hosts. Catalyzes the biosynthesis of deoxyribonucleotides from the corresponding ribonucleotides. The sequence is that of Ribonucleoside-diphosphate reductase large subunit from Amazona oratrix (yellow-headed parrot).